Consider the following 254-residue polypeptide: Uracil-DNA glycosylase (254 aa).

D78 serves as the catalytic Proton acceptor.

Belongs to the uracil-DNA glycosylase (UDG) superfamily. UNG family.

Its subcellular location is the cytoplasm. It catalyses the reaction Hydrolyzes single-stranded DNA or mismatched double-stranded DNA and polynucleotides, releasing free uracil.. Functionally, excises uracil residues from the DNA which can arise as a result of misincorporation of dUMP residues by DNA polymerase or due to deamination of cytosine. This Bordetella petrii (strain ATCC BAA-461 / DSM 12804 / CCUG 43448) protein is Uracil-DNA glycosylase.